Consider the following 720-residue polypeptide: Polyribonucleotide nucleotidyltransferase (720 aa).

Residues D484 and D490 each coordinate Mg(2+). The region spanning 551–610 (PRMYKINIDPSKIGSVIGSGGKTIRSIIEQTNTTVDIENDGTVVIGATDEASAKKAIKII) is the KH domain. The S1 motif domain maps to 620–688 (GSIYTGKVTR…NQGRVNLSHR (69 aa)). The disordered stretch occupies residues 697–720 (PISRNRDSQPRRPGPFRPSDRSNS).

The protein belongs to the polyribonucleotide nucleotidyltransferase family. The cofactor is Mg(2+).

The protein resides in the cytoplasm. The enzyme catalyses RNA(n+1) + phosphate = RNA(n) + a ribonucleoside 5'-diphosphate. Functionally, involved in mRNA degradation. Catalyzes the phosphorolysis of single-stranded polyribonucleotides processively in the 3'- to 5'-direction. This Dehalococcoides mccartyi (strain CBDB1) protein is Polyribonucleotide nucleotidyltransferase.